The chain runs to 355 residues: uncharacterized protein (355 aa).

This sequence belongs to the TmcAL family.

This is an uncharacterized protein from Methanocaldococcus jannaschii (strain ATCC 43067 / DSM 2661 / JAL-1 / JCM 10045 / NBRC 100440) (Methanococcus jannaschii).